We begin with the raw amino-acid sequence, 330 residues long: Clavaminate synthase-like protein At3g21360 (330 aa).

Alanine 2 is subject to N-acetylalanine. The Fe cation site is built by histidine 120, glutamate 122, and histidine 313.

Fe cation is required as a cofactor.

The protein is Clavaminate synthase-like protein At3g21360 of Arabidopsis thaliana (Mouse-ear cress).